Reading from the N-terminus, the 374-residue chain is DNA replication and repair protein RecF (374 aa).

An ATP-binding site is contributed by 34 to 41; it reads GDNGAGKT.

Belongs to the RecF family.

The protein localises to the cytoplasm. Its function is as follows. The RecF protein is involved in DNA metabolism; it is required for DNA replication and normal SOS inducibility. RecF binds preferentially to single-stranded, linear DNA. It also seems to bind ATP. The sequence is that of DNA replication and repair protein RecF from Rhizobium leguminosarum bv. trifolii (strain WSM2304).